Consider the following 146-residue polypeptide: D-aminoacyl-tRNA deacylase (146 aa).

The Gly-cisPro motif, important for rejection of L-amino acids signature appears at 137–138 (GP).

The protein belongs to the DTD family. Homodimer.

It is found in the cytoplasm. The enzyme catalyses glycyl-tRNA(Ala) + H2O = tRNA(Ala) + glycine + H(+). It carries out the reaction a D-aminoacyl-tRNA + H2O = a tRNA + a D-alpha-amino acid + H(+). An aminoacyl-tRNA editing enzyme that deacylates mischarged D-aminoacyl-tRNAs. Also deacylates mischarged glycyl-tRNA(Ala), protecting cells against glycine mischarging by AlaRS. Acts via tRNA-based rather than protein-based catalysis; rejects L-amino acids rather than detecting D-amino acids in the active site. By recycling D-aminoacyl-tRNA to D-amino acids and free tRNA molecules, this enzyme counteracts the toxicity associated with the formation of D-aminoacyl-tRNA entities in vivo and helps enforce protein L-homochirality. The sequence is that of D-aminoacyl-tRNA deacylase from Bacillus cereus (strain B4264).